The sequence spans 512 residues: Mesoderm induction early response protein 1 (512 aa).

Residues 1-16 (MAEPSVESSSPGGSAT) are compositionally biased toward low complexity. Disordered regions lie at residues 1-63 (MAEP…REGD) and 75-173 (YGST…EDYI). S10 is subject to Phosphoserine. Over residues 17–36 (SDDHEFDPSADMLVHDFDDE) the composition is skewed to basic and acidic residues. Acidic residues-rich tracts occupy residues 37-46 (RTLEEEEMME) and 83-105 (EEDE…DNDD). Over residues 129-144 (QSSNDDPSQSVASQDA) the composition is skewed to polar residues. Phosphoserine is present on S141. A Phosphotyrosine modification is found at Y155. A phosphoserine mark is found at S160 and S166. Positions 160–173 (SEVEEESEEDEDYI) are enriched in acidic residues. The 99-residue stretch at 180–278 (KEIMVGSMFQ…EALRRLRFNV (99 aa)) folds into the ELM2 domain. Positions 180–284 (KEIMVGSMFQ…RFNVKAAREE (105 aa)) are interaction with HDAC1. Residue K239 forms a Glycyl lysine isopeptide (Lys-Gly) (interchain with G-Cter in SUMO2) linkage. Positions 283-335 (EELSVWTEEECRNFEQGLKAYGKDFHLIQANKVRTRSVGECVAFYYMWKKSER) constitute an SANT domain. Residues 366–512 (ESESAASSRA…KFEELENTDD (147 aa)) are disordered. A phosphoserine mark is found at S367, S369, and S377. Polar residues predominate over residues 396 to 409 (TVSTTNQNGVSSNG). The segment covering 414–423 (LNKEEVKVEG) has biased composition (basic and acidic residues). A Glycyl lysine isopeptide (Lys-Gly) (interchain with G-Cter in SUMO2) cross-link involves residue K420. The residue at position 448 (T448) is a Phosphothreonine. Positions 462–475 (ARNENDFDEKSERP) are enriched in basic and acidic residues. Residues 482–494 (NSNGKESPGSSEF) are compositionally biased toward polar residues. Phosphoserine is present on residues S483, S488, and S491.

As to quaternary structure, interacts with HDAC1. Part of a complex containing at least CDYL, MIER1, MIER2, HDAC1 and HDAC2.

The protein localises to the nucleus. Transcriptional repressor regulating the expression of a number of genes including SP1 target genes. Probably functions through recruitment of HDAC1 a histone deacetylase involved in chromatin silencing. This chain is Mesoderm induction early response protein 1 (MIER1), found in Pongo abelii (Sumatran orangutan).